A 153-amino-acid polypeptide reads, in one-letter code: Ubiquitin-conjugating enzyme E2-18 kDa (153 aa).

The region spanning 2 to 149 (AATRRLTREL…AEEFTKKNAE (148 aa)) is the UBC core domain. Cysteine 86 functions as the Glycyl thioester intermediate in the catalytic mechanism.

This sequence belongs to the ubiquitin-conjugating enzyme family.

The enzyme catalyses S-ubiquitinyl-[E1 ubiquitin-activating enzyme]-L-cysteine + [E2 ubiquitin-conjugating enzyme]-L-cysteine = [E1 ubiquitin-activating enzyme]-L-cysteine + S-ubiquitinyl-[E2 ubiquitin-conjugating enzyme]-L-cysteine.. The protein operates within protein modification; protein ubiquitination. Catalyzes the covalent attachment of ubiquitin to other proteins. The polypeptide is Ubiquitin-conjugating enzyme E2-18 kDa (Ubc84D) (Drosophila melanogaster (Fruit fly)).